The primary structure comprises 551 residues: Cytochrome c oxidase subunit 1 (551 aa).

A helical membrane pass occupies residues 34-54 (TLYLYSGVWGGLFGASLSLMI). Gly62 is a binding site for Ca(2+). Residue His79 coordinates Fe(II)-heme a. Transmembrane regions (helical) follow at residues 81–101 (LMMI…NWLI), 126–146 (ALYL…GWTI), 163–183 (VLIV…INFA), 209–229 (TAVL…MILF), 252–272 (LFWF…FGVM), and 285–305 (VFGL…GCMV). His258 contacts Cu cation. The 1'-histidyl-3'-tyrosine (His-Tyr) cross-link spans 258–262 (HPEVY). Tyr262 contacts O2. 2 residues coordinate Cu cation: His308 and His309. 2 consecutive transmembrane segments (helical) span residues 326-346 (ATMV…ATMA) and 356-376 (AYWS…GVLL). 2 residues coordinate Mg(2+): His386 and Asp387. 3 helical membrane-spanning segments follow: residues 391 to 411 (VVAH…FCGL), 432 to 452 (FMAM…LGLS), and 475 to 495 (GSAV…EALV). His394 contacts heme a3. His396 contacts Fe(II)-heme a.

The protein belongs to the heme-copper respiratory oxidase family. Component of the cytochrome c oxidase (complex IV, CIV), a multisubunit enzyme composed of a catalytic core of 3 subunits and several supernumerary subunits. The complex exists as a monomer or a dimer and forms supercomplexes (SCs) in the inner mitochondrial membrane with ubiquinol-cytochrome c oxidoreductase (cytochrome b-c1 complex, complex III, CIII). The cofactor is heme. It depends on Cu cation as a cofactor.

The protein resides in the mitochondrion inner membrane. It carries out the reaction 4 Fe(II)-[cytochrome c] + O2 + 8 H(+)(in) = 4 Fe(III)-[cytochrome c] + 2 H2O + 4 H(+)(out). It functions in the pathway energy metabolism; oxidative phosphorylation. Functionally, component of the cytochrome c oxidase, the last enzyme in the mitochondrial electron transport chain which drives oxidative phosphorylation. The respiratory chain contains 3 multisubunit complexes succinate dehydrogenase (complex II, CII), ubiquinol-cytochrome c oxidoreductase (cytochrome b-c1 complex, complex III, CIII) and cytochrome c oxidase (complex IV, CIV), that cooperate to transfer electrons derived from NADH and succinate to molecular oxygen, creating an electrochemical gradient over the inner membrane that drives transmembrane transport and the ATP synthase. Cytochrome c oxidase is the component of the respiratory chain that catalyzes the reduction of oxygen to water. Electrons originating from reduced cytochrome c in the intermembrane space (IMS) are transferred via the dinuclear copper A center (CU(A)) of subunit 2 and heme A of subunit 1 to the active site in subunit 1, a binuclear center (BNC) formed by heme A3 and copper B (CU(B)). The BNC reduces molecular oxygen to 2 water molecules using 4 electrons from cytochrome c in the IMS and 4 protons from the mitochondrial matrix. The protein is Cytochrome c oxidase subunit 1 (COI) of Mytilus edulis (Blue mussel).